Reading from the N-terminus, the 514-residue chain is Putative thymidine phosphorylase (514 aa).

The protein belongs to the thymidine/pyrimidine-nucleoside phosphorylase family. Type 2 subfamily.

It catalyses the reaction thymidine + phosphate = 2-deoxy-alpha-D-ribose 1-phosphate + thymine. The protein is Putative thymidine phosphorylase of Sphingopyxis alaskensis (strain DSM 13593 / LMG 18877 / RB2256) (Sphingomonas alaskensis).